Consider the following 466-residue polypeptide: MSIASVASVFKGEHAVGSQVTVRGWVRTRRDSKAGISFLAVYDGSCFDPIQGVLPNSLANYNDDVLKLTAGCSVVMTGEVVASPGAGQAFELQVTEIVVTGFVDDPDTYPMSAKRHSIEHLRELAHLRPRTNIIGAVARVRNCLSQAIHRFYHQEGFIWVSTPLITASDCEGAGEMFRVSTLDMENLPRTAEGKVDYDKDFFGKESFLTVSGQLNAETYACALSKVYTFGPTFRAENSNTTRHLAEFWMVEPEVAFATLDDAAELAEKMLKFAFSAVLEERMDDLNFFNERVDKTVIERLQAFVSSDFAQVDYTDAVEILKNCGKKFEFAVEWGIDLQSEHERYLAEEHFKAPVVVKNYPKDIKAFYMRLNDDGKTVAAMDVLAPGIGEIIGGAQREERLDVLDARLAEMDLSQEDYWWYRDLRRYGTVPHSGFGLGFERLVSYVTGVNNIRDVIPFPRAPRSASF.

The protein belongs to the class-II aminoacyl-tRNA synthetase family. In terms of assembly, homodimer.

It is found in the cytoplasm. The catalysed reaction is tRNA(Asn) + L-asparagine + ATP = L-asparaginyl-tRNA(Asn) + AMP + diphosphate + H(+). The chain is Asparagine--tRNA ligase from Shewanella frigidimarina (strain NCIMB 400).